The sequence spans 433 residues: Acetylcholine receptor-like protein cup-4 (433 aa).

Positions 1–24 (MKIIIFVCFILIFYLPIQKKHVNS) are cleaved as a signal peptide. Residues asparagine 41 and asparagine 68 are each glycosylated (N-linked (GlcNAc...) asparagine). Cysteine 178 and cysteine 192 form a disulfide bridge. N-linked (GlcNAc...) asparagine glycosylation is found at asparagine 237 and asparagine 249. Transmembrane regions (helical) follow at residues 282-302 (EAAVVTPCIVVASLISMTFFI), 307-327 (STFLLMMLHFYVQLIFLHDLV), 337-357 (IPFCIKLIGILMYTNGLTLVL), and 413-433 (PIIGFVLIILLICMFFVCLLL).

This sequence belongs to the ligand-gated ion channel (TC 1.A.9) family. Acetylcholine receptor (TC 1.A.9.1) subfamily. In terms of tissue distribution, expressed in coelomocytes.

The protein localises to the cytoplasmic vesicle membrane. In terms of biological role, thought to regulate endocytosis in coelomocytes through modulation of phospholipase C activity. Possible acetylcholine receptor. The chain is Acetylcholine receptor-like protein cup-4 (cup-4) from Caenorhabditis elegans.